We begin with the raw amino-acid sequence, 267 residues long: GTP cyclohydrolase FolE2 (267 aa).

It belongs to the GTP cyclohydrolase IV family.

The enzyme catalyses GTP + H2O = 7,8-dihydroneopterin 3'-triphosphate + formate + H(+). It participates in cofactor biosynthesis; 7,8-dihydroneopterin triphosphate biosynthesis; 7,8-dihydroneopterin triphosphate from GTP: step 1/1. Its function is as follows. Converts GTP to 7,8-dihydroneopterin triphosphate. This Citrifermentans bemidjiense (strain ATCC BAA-1014 / DSM 16622 / JCM 12645 / Bem) (Geobacter bemidjiensis) protein is GTP cyclohydrolase FolE2.